The primary structure comprises 200 residues: NAD(P)H-dependent FMN reductase C4B3.06c (200 aa).

Residues arginine 22, glutamine 96 to glycine 99, and tyrosine 126 contribute to the FMN site.

In terms of assembly, homodimer.

The protein resides in the cytoplasm. It is found in the nucleus. The catalysed reaction is FMNH2 + NADP(+) = FMN + NADPH + 2 H(+). The enzyme catalyses FMNH2 + NAD(+) = FMN + NADH + 2 H(+). Its function is as follows. Has several reductase activities that are NAD(P)H-dependent and involve FMN as a cofactor. May be involved in ferric iron assimilation. The chain is NAD(P)H-dependent FMN reductase C4B3.06c from Schizosaccharomyces pombe (strain 972 / ATCC 24843) (Fission yeast).